A 447-amino-acid chain; its full sequence is Protein TIC 40, chloroplastic (447 aa).

Residues 1-43 (MENLTLVSCSASSPKLLIGCNFTSSLKNPTGFSRRTPNIVLRC) constitute a chloroplast transit peptide. The N-terminal 33 residues, 44 to 76 (SKISASAQSQSPSSRPENTGEIVVVKQRSKAFA), are a transit peptide targeting the chloroplast; inner membrane. The Chloroplast intermembrane segment spans residues 77–104 (SIFSSSRDQQTTSVASPSVPVPPPSSST). A helical transmembrane segment spans residues 105–125 (IGSPLFWIGVGVGLSALFSYV). Over 126 to 447 (TSNLKKYAMQ…ISQLFPGMTG (322 aa)) the chain is Stromal. Positions 148–160 (QNSQFNNSGFPSG) are enriched in low complexity. Disordered stretches follow at residues 148–214 (QNSQ…DIEV) and 231–261 (KNYA…TNSP). Residues 161–171 (SPFPFPFPPQT) show a composition bias toward pro residues. The segment covering 172 to 186 (SPASSPFQSQSQSSG) has biased composition (low complexity). 2 STI1 domains span residues 310 to 344 (DPTV…RQQL) and 386 to 425 (PEEV…IMKY).

Part of the Tic complex. Interacts with HSP93, TIC110 and LTD. As to expression, expressed in seedlings, flowers, leaves, stems and roots.

The protein localises to the plastid. It localises to the chloroplast inner membrane. Functionally, involved in protein precursor import into chloroplasts. Part of the motor complex consisting of a co-chaperone (TIC40) and a chaperone (HSP93) associated with the import channel (TIC110). Causes the release of bound transit peptides from TIC110 and stimulates ATP hydrolysis by HSP93. Involved in reinsertion of proteins from the chloroplast stroma into the inner membrane. The sequence is that of Protein TIC 40, chloroplastic (TIC40) from Arabidopsis thaliana (Mouse-ear cress).